Here is a 387-residue protein sequence, read N- to C-terminus: 3-ketoacyl-CoA thiolase (387 aa).

Cysteine 91 acts as the Acyl-thioester intermediate in catalysis. Catalysis depends on proton acceptor residues histidine 343 and cysteine 373.

This sequence belongs to the thiolase-like superfamily. Thiolase family. In terms of assembly, heterotetramer of two alpha chains (FadB) and two beta chains (FadA).

It is found in the cytoplasm. The catalysed reaction is an acyl-CoA + acetyl-CoA = a 3-oxoacyl-CoA + CoA. It functions in the pathway lipid metabolism; fatty acid beta-oxidation. Its function is as follows. Catalyzes the final step of fatty acid oxidation in which acetyl-CoA is released and the CoA ester of a fatty acid two carbons shorter is formed. The protein is 3-ketoacyl-CoA thiolase of Yersinia pseudotuberculosis serotype O:1b (strain IP 31758).